We begin with the raw amino-acid sequence, 234 residues long: Protein spitz (234 aa).

The N-terminal stretch at 1–28 is a signal peptide; the sequence is MHSTMSVQHGLVALVLIGCLAHPWHVEA. Over 29-143 the chain is Lumenal; it reads CSSRTVPKPR…RPRPMLEKAS (115 aa). A disordered region spans residues 33–71; sequence TVPKPRSSISSSMSGTALPPTQAPVTSSTTMRTTTTTTP. The span at 56-71 shows a compositional bias: low complexity; sequence PVTSSTTMRTTTTTTP. N-linked (GlcNAc...) asparagine glycosylation is present at N74. An EGF-like domain is found at 78-122; it reads PTYKCPETFDAWYCLNDAHCFAVKIADLPVYSCECAIGFMGQRCE. Disulfide bonds link C82/C97, C91/C110, and C112/C121. A helical transmembrane segment spans residues 144 to 164; the sequence is IASGAMCALVFMLFVCLAFYL. The Cytoplasmic segment spans residues 165-234; it reads RFEQRAAKKA…SFAIRRSNKL (70 aa).

Interacts with Star via the lumenal domain. Proteolytic processing by Rhomboid occurs in the Golgi. Cleavage takes place within the transmembrane domain close to residue 144 and the active growth factor is released. In terms of processing, N-glycosylated and O-glycosylated. As to expression, expressed throughout the embryo.

Its subcellular location is the cell membrane. The protein resides in the endoplasmic reticulum membrane. The protein localises to the golgi apparatus membrane. Ligand for the EGF receptor (Gurken). Involved in a number of unrelated developmental choices, for example, dorsal-ventral axis formation, glial migration, sensory organ determination, and muscle development. It is required for photoreceptor determination. This chain is Protein spitz (spi), found in Drosophila melanogaster (Fruit fly).